A 615-amino-acid polypeptide reads, in one-letter code: MSEPGKGDDCLELESSMAESRLRAPDLGVSRCLGKCQKNSPGARKHPFSGKSFYLDLPAGKNLQFLTGAIQQLGGVIEGFLSKEVSYIVSSRREVKAESSGKSHRGCPSPSPSEVRVETSAMVDPKGSHPRPSRKPVDSVPLSRGKELLQKAIRNQGSISGGGSGGSSSLLTNARSWGVRILHVDEMMMHVQQLSLASLCVKKQQPKKPEGTCPAAESRTRKVARLKAPFLKIEDESRKFRPFHHQFKSFPEISFLGPKDASPFEAPTTLGSMHHTRESKDGEPSPRSAAHTMPRRKKGYCECCQEAFEELHVHLQSAQHRSFALEAHLYAEVDRIIAQLSHSFADIPFQAGLPRWSGSPASDCDPLCPETLHPHQPSHPRAASPRIRKEDSCQASVTQGRAAGQQRWTESLDGVMGPPASHTCVSATTLLPALPKGSREQGCLCPCPASFTQSHLVTSLALLPGEWSPAEDMPLHPSQENSFAPADIPVKGPLLFPEARPWLMSARCWVRPFPFVTWGCLIPHDTTPLHEEVSPCPCLRLGYLYLLLTQSLWCRVRVPSLSTAGPIPRTSHPCTLAFPSYLNDHDLGHLCQAKPQGWNTPQPFLHCGFLAVDSG.

In terms of domain architecture, BRCT spans 43 to 133; it reads ARKHPFSGKS…DPKGSHPRPS (91 aa). 2 disordered regions span residues 93–141 and 264–293; these read REVK…DSVP and FEAPTTLGSMHHTRESKDGEPSPRSAAHTM. The segment covering 275–284 has biased composition (basic and acidic residues); sequence HTRESKDGEP. A DBF4-type zinc finger spans residues 294-343; it reads PRRKKGYCECCQEAFEELHVHLQSAQHRSFALEAHLYAEVDRIIAQLSHS. Zn(2+)-binding residues include cysteine 301, cysteine 304, histidine 314, and histidine 320. The segment at 371–407 is disordered; it reads TLHPHQPSHPRAASPRIRKEDSCQASVTQGRAAGQQR.

As to quaternary structure, forms a complex with CDC7. Note that CDC7 forms distinct complex either with DBF4/DBF4A or DBF4B. Such complexes are stable upon replication stress. In terms of processing, phosphorylated. As to expression, widely expressed. Highly expressed in testis.

Its subcellular location is the nucleus. In terms of biological role, regulatory subunit for CDC7 which activates its kinase activity thereby playing a central role in DNA replication and cell proliferation. Required for progression of S and M phases. The complex CDC7-DBF4B selectively phosphorylates MCM2 subunit at 'Ser-40' and then is involved in regulating the initiation of DNA replication during cell cycle. The chain is Protein DBF4 homolog B (DBF4B) from Homo sapiens (Human).